A 440-amino-acid chain; its full sequence is Enolase (440 aa).

Residues His-159 and Glu-168 each contribute to the substrate site. Residue Glu-211 is the Proton donor of the active site. Asp-245, Glu-296, and Asp-321 together coordinate Mg(2+). Substrate contacts are provided by Glu-296 and Asp-321. Lys-346 acts as the Proton acceptor in catalysis. Substrate contacts are provided by residues 373–376 (SHRS) and Lys-397.

It belongs to the enolase family. Homodimer. Mg(2+) is required as a cofactor.

The protein localises to the cytoplasm. The catalysed reaction is (2R)-2-phosphoglycerate = phosphoenolpyruvate + H2O. Its pathway is carbohydrate degradation; glycolysis; pyruvate from D-glyceraldehyde 3-phosphate: step 4/5. This chain is Enolase (eno-1), found in Tuber borchii (White truffle).